The following is a 930-amino-acid chain: Translation initiation factor IF-2 (930 aa).

The disordered stretch occupies residues 27-342 (LGLDVKSHSS…APKPVTERKF (316 aa)). Over residues 52-103 (KAAAPQAPAEKPVAAQPSPQKTPAKEAAPVKAEPTEAKAAAQPEAKTETAAP) the composition is skewed to low complexity. 2 stretches are compositionally biased toward basic and acidic residues: residues 112–128 (FKAEREARAKEEAERRK) and 136–178 (QNKE…DGRR). The segment covering 183–195 (HQGFNGQKRQQPQ) has biased composition (polar residues). A compositionally biased stretch (basic and acidic residues) spans 218-245 (RSSEERFKQAQEAKEVMERQNRRKEQPK). Residues 251-268 (PVQPAPAPSAPAANPSPA) show a composition bias toward pro residues. Residues 280–297 (ARPDKKRDDFDREEEGPR) show a composition bias toward basic and acidic residues. Positions 302-318 (NRSSQNQVRNQRNSNWN) are enriched in low complexity. Positions 432 to 599 (ERPPVVTIMG…TVLLVAEIQE (168 aa)) constitute a tr-type G domain. Residues 441-448 (GHVDHGKT) are G1. 441–448 (GHVDHGKT) is a GTP binding site. Positions 466-470 (GITQH) are G2. A G3 region spans residues 487–490 (DTPG). GTP is bound by residues 487–491 (DTPGH) and 541–544 (NKID). Residues 541–544 (NKID) are G4. Residues 577–579 (SAK) form a G5 region.

It belongs to the TRAFAC class translation factor GTPase superfamily. Classic translation factor GTPase family. IF-2 subfamily.

The protein localises to the cytoplasm. One of the essential components for the initiation of protein synthesis. Protects formylmethionyl-tRNA from spontaneous hydrolysis and promotes its binding to the 30S ribosomal subunits. Also involved in the hydrolysis of GTP during the formation of the 70S ribosomal complex. This Streptococcus sanguinis (strain SK36) protein is Translation initiation factor IF-2.